We begin with the raw amino-acid sequence, 151 residues long: PTITNDGVSIAKEIELEDPYEKIGAELVKEVAKKTDDVAGDGTTTATVLAQALVREGLRNVAAGANPLGLKRGIEKAVEKVTETLLKSAKEVETKEQIAATAGISAGDQSIGDLIAEAMDKVGNEGVITVEESNTFGLQLELTEGMRFDKG.

ATP is bound at residue 41–45 (DGTTT).

This sequence belongs to the chaperonin (HSP60) family. In terms of assembly, forms a cylinder of 14 subunits composed of two heptameric rings stacked back-to-back. Interacts with the co-chaperonin GroES.

It localises to the cytoplasm. It carries out the reaction ATP + H2O + a folded polypeptide = ADP + phosphate + an unfolded polypeptide.. In terms of biological role, together with its co-chaperonin GroES, plays an essential role in assisting protein folding. The GroEL-GroES system forms a nano-cage that allows encapsulation of the non-native substrate proteins and provides a physical environment optimized to promote and accelerate protein folding. The protein is Chaperonin GroEL of Mycolicibacterium fortuitum (Mycobacterium fortuitum).